The primary structure comprises 97 residues: Serine protease inhibitor Kazal-type 13 (97 aa).

The N-terminal stretch at Met-1–Ser-26 is a signal peptide. N-linked (GlcNAc...) asparagine glycosylation occurs at Asn-33. The region spanning Arg-36 to Glu-97 is the Kazal-like domain. 3 disulfide bridges follow: Cys-42–Cys-78, Cys-56–Cys-75, and Cys-64–Cys-96.

The protein localises to the secreted. Its function is as follows. May be a serine protease inhibitor. Essential for sperm maturation and fertility. Inhibits sperm acrosome reaction, protecting sperm from premature reaction. The polypeptide is Serine protease inhibitor Kazal-type 13 (Spink13) (Mus musculus (Mouse)).